The sequence spans 131 residues: Profilin-4 (131 aa).

An intrachain disulfide couples cysteine 13 to cysteine 115. Residues 81 to 97 (AVIRGKKGAGGITVKKT) carry the Involved in PIP2 interaction motif. Threonine 111 carries the phosphothreonine modification.

Belongs to the profilin family. In terms of assembly, occurs in many kinds of cells as a complex with monomeric actin in a 1:1 ratio. Phosphorylated by MAP kinases.

It is found in the cytoplasm. Its subcellular location is the cytoskeleton. In terms of biological role, binds to actin and affects the structure of the cytoskeleton. At high concentrations, profilin prevents the polymerization of actin, whereas it enhances it at low concentrations. The sequence is that of Profilin-4 from Olea europaea (Common olive).